We begin with the raw amino-acid sequence, 468 residues long: MATEYALRMGDGKRVFLAREKIMEEIEAGTANAADLGEIPALSADEMNKLAEILMMPGKAVSVEHGMEIPVTHDIGTIRLDGDQGNSGVGIPSSRLVGCMMHERAFGADTMELGHIDYSFKPVKPVVANECQAMEVCQQNMIIPLFYGAMPNMGLYYTPDGPFENPGDLMKAFKIQEAWDSMEHAAEHLTRDTIWIMQKLFASGADGVNFDTTAAAGDGDFYGTLHAIEALRKEFPEMYIEAGMAGEMVLGMHGNLQYDGVTLAGLWPHQQAPLVAKAGANVFGPVVNTNTSKTSPWNLARAVTFIKEAVKVSSLPCHVDMGMGVGGIPMLETPPIDAVTRASKAMVEIAGVDGIOIGVGDPLGMPISHIMASGMTGMRAAGDLVARMQFSKNMKIKEAKEYVAKKLNVEIRDLADEYIMRELREELNIGVITSVPGSAKGIAAKMNIEKLLGIKINSCELFRKQTGK.

Residue O356 is a non-standard amino acid, pyrrolysine.

This sequence belongs to the dimethylamine methyltransferase family.

The catalysed reaction is Co(I)-[dimethylamine-specific corrinoid protein] + dimethylamine + H(+) = methyl-Co(III)-[dimethylamine-specific corrinoid protein] + methylamine. Its pathway is one-carbon metabolism; methanogenesis from dimethylamine. Catalyzes the transfer of a methyl group from dimethylamine to the corrinoid cofactor of MtbC. The protein is Dimethylamine methyltransferase MtbB1 (mtbB1) of Methanosarcina mazei (strain ATCC BAA-159 / DSM 3647 / Goe1 / Go1 / JCM 11833 / OCM 88) (Methanosarcina frisia).